Reading from the N-terminus, the 198-residue chain is Small ribosomal subunit protein uS4 (198 aa).

An S4 RNA-binding domain is found at 90-152; sequence TRLDNLVLRA…SRSNELFKEN (63 aa).

It belongs to the universal ribosomal protein uS4 family. Part of the 30S ribosomal subunit. Contacts protein S5. The interaction surface between S4 and S5 is involved in control of translational fidelity.

One of the primary rRNA binding proteins, it binds directly to 16S rRNA where it nucleates assembly of the body of the 30S subunit. Its function is as follows. With S5 and S12 plays an important role in translational accuracy. The sequence is that of Small ribosomal subunit protein uS4 from Finegoldia magna (strain ATCC 29328 / DSM 20472 / WAL 2508) (Peptostreptococcus magnus).